The following is a 221-amino-acid chain: Very-long-chain (3R)-3-hydroxyacyl-CoA dehydratase PASTICCINO 2B (221 aa).

Topologically, residues 1–11 are cytoplasmic; sequence MTGVGSAVRRL. A helical transmembrane segment spans residues 12–32; the sequence is YLSVYNWAVFFGWAQVLYYAV. Residues 33 to 51 lie on the Lumenal side of the membrane; it reads TTLLESGHEAVYAAVERPL. The helical transmembrane segment at 52–70 threads the bilayer; that stretch reads QFAQTAAFLEILHGLVGLV. Residues 71-76 are Cytoplasmic-facing; it reads RSPVSA. Residues 77–95 form a helical membrane-spanning segment; that stretch reads TLPQIGSRLFLTWGILWSF. Topologically, residues 96–100 are lumenal; sequence PETHS. The chain crosses the membrane as a helical span at residues 101 to 121; the sequence is HILVTSLVISWSITEIIRYSF. The Cytoplasmic portion of the chain corresponds to 122-141; that stretch reads FGMKETFGFAPSWLLWLRYS. A helical membrane pass occupies residues 142-165; it reads TFMVLYPTGISSEVGLIYIALPYM. Catalysis depends on residues Tyr-147 and Glu-154. Topologically, residues 166–184 are lumenal; the sequence is KATEKYCLRMPNKWNFSFD. The helical transmembrane segment at 185 to 209 threads the bilayer; the sequence is FSYASILSLAVYVPGSPHMFTYMLA. The Cytoplasmic portion of the chain corresponds to 210–221; it reads QRKKALAKAKAA.

Belongs to the very long-chain fatty acids dehydratase HACD family.

The protein resides in the endoplasmic reticulum membrane. It catalyses the reaction a very-long-chain (3R)-3-hydroxyacyl-CoA = a very-long-chain (2E)-enoyl-CoA + H2O. Its pathway is lipid metabolism; fatty acid biosynthesis. In terms of biological role, catalyzes the third of the four reactions of the long-chain fatty acids elongation cycle. This endoplasmic reticulum-bound enzymatic process, allows the addition of two carbons to the chain of long- and very long-chain fatty acids/VLCFAs per cycle. This enzyme catalyzes the dehydration of the 3-hydroxyacyl-CoA intermediate into trans-2,3-enoyl-CoA, within each cycle of fatty acid elongation. Thereby, it participates in the production of VLCFAs of different chain lengths that are involved in multiple biological processes as precursors of membrane lipids and lipid mediators. May be an anti-phosphatase that prevents CDKA-1 dephosphorylation and activation. Involved in the hormonal control of cell division and differentiation. Required for proliferation control of meristematic and non-meristematic cells. Negative regulator of the cell cycle. This chain is Very-long-chain (3R)-3-hydroxyacyl-CoA dehydratase PASTICCINO 2B (PAS2B), found in Oryza sativa subsp. japonica (Rice).